Here is a 199-residue protein sequence, read N- to C-terminus: uncharacterized protein (199 aa).

Residues 72–116 (EIYSEIENEESDIEEMSEEMKAFFAKTQEHRQKLKEQRAAEKRKE) are a coiled coil. Over residues 98–117 (TQEHRQKLKEQRAAEKRKEG) the composition is skewed to basic and acidic residues. Residues 98-127 (TQEHRQKLKEQRAAEKRKEGQSSSKSQEEY) are disordered.

This is an uncharacterized protein from Caenorhabditis elegans.